The chain runs to 146 residues: Probable acetyltransferase HI_0677 (146 aa).

Residues 1–146 enclose the N-acetyltransferase domain; that stretch reads MKLFKAEQWN…ERLFELSLSC (146 aa).

The polypeptide is Probable acetyltransferase HI_0677 (Haemophilus influenzae (strain ATCC 51907 / DSM 11121 / KW20 / Rd)).